The primary structure comprises 538 residues: Bifunctional purine biosynthesis protein PurH (538 aa).

The region spanning 6–158 (KHIPAPDLHR…KNHAYVATVV (153 aa)) is the MGS-like domain.

Belongs to the PurH family.

It catalyses the reaction (6R)-10-formyltetrahydrofolate + 5-amino-1-(5-phospho-beta-D-ribosyl)imidazole-4-carboxamide = 5-formamido-1-(5-phospho-D-ribosyl)imidazole-4-carboxamide + (6S)-5,6,7,8-tetrahydrofolate. The enzyme catalyses IMP + H2O = 5-formamido-1-(5-phospho-D-ribosyl)imidazole-4-carboxamide. It functions in the pathway purine metabolism; IMP biosynthesis via de novo pathway; 5-formamido-1-(5-phospho-D-ribosyl)imidazole-4-carboxamide from 5-amino-1-(5-phospho-D-ribosyl)imidazole-4-carboxamide (10-formyl THF route): step 1/1. The protein operates within purine metabolism; IMP biosynthesis via de novo pathway; IMP from 5-formamido-1-(5-phospho-D-ribosyl)imidazole-4-carboxamide: step 1/1. The protein is Bifunctional purine biosynthesis protein PurH of Brucella anthropi (strain ATCC 49188 / DSM 6882 / CCUG 24695 / JCM 21032 / LMG 3331 / NBRC 15819 / NCTC 12168 / Alc 37) (Ochrobactrum anthropi).